A 250-amino-acid chain; its full sequence is 3-deoxy-manno-octulosonate cytidylyltransferase (250 aa).

It belongs to the KdsB family.

Its subcellular location is the cytoplasm. The enzyme catalyses 3-deoxy-alpha-D-manno-oct-2-ulosonate + CTP = CMP-3-deoxy-beta-D-manno-octulosonate + diphosphate. It functions in the pathway nucleotide-sugar biosynthesis; CMP-3-deoxy-D-manno-octulosonate biosynthesis; CMP-3-deoxy-D-manno-octulosonate from 3-deoxy-D-manno-octulosonate and CTP: step 1/1. It participates in bacterial outer membrane biogenesis; lipopolysaccharide biosynthesis. Its function is as follows. Activates KDO (a required 8-carbon sugar) for incorporation into bacterial lipopolysaccharide in Gram-negative bacteria. In Rhizobium meliloti (strain 1021) (Ensifer meliloti), this protein is 3-deoxy-manno-octulosonate cytidylyltransferase.